Reading from the N-terminus, the 160-residue chain is Transcriptional repressor NrdR (160 aa).

A compositionally biased stretch (polar residues) spans 1–11 (MRCPSCNSLDT). The segment at 1 to 20 (MRCPSCNSLDTQVKDSRPTE) is disordered. The segment at 3–34 (CPSCNSLDTQVKDSRPTEDSAVIRRRRVCMAC) is a zinc-finger region. The ATP-cone domain maps to 49 to 139 (LTVIKRNGRR…VYRNFREAKD (91 aa)).

The protein belongs to the NrdR family. Zn(2+) serves as cofactor.

In terms of biological role, negatively regulates transcription of bacterial ribonucleotide reductase nrd genes and operons by binding to NrdR-boxes. This chain is Transcriptional repressor NrdR, found in Nitrobacter winogradskyi (strain ATCC 25391 / DSM 10237 / CIP 104748 / NCIMB 11846 / Nb-255).